We begin with the raw amino-acid sequence, 500 residues long: Tektin-like protein 1 (500 aa).

Residues 198–229 adopt a coiled-coil conformation; it reads MLTWEKEELKSMKRKMEADMEKSEALLKTLAS. Tyrosine 372 is subject to Phosphotyrosine. A coiled-coil region spans residues 420–444; the sequence is DKLQRHISHVEKNLDELLSMRKKLT.

As to quaternary structure, microtubule inner protein component of sperm flagellar doublet microtubules.

Its subcellular location is the cytoplasm. It localises to the cytoskeleton. The protein resides in the flagellum axoneme. Functionally, microtubule inner protein (MIP) part of the dynein-decorated doublet microtubules (DMTs) in sperm flagellar axoneme, which is required for motile flagellum beating. Forms an extensive interaction network cross-linking the lumen of axonemal doublet microtubules. The chain is Tektin-like protein 1 from Bos taurus (Bovine).